The primary structure comprises 506 residues: Cysteine--tRNA ligase (506 aa).

Residue cysteine 43 coordinates Zn(2+). The 'HIGH' region motif lies at 45–55 (VTVYDLCHLGH). The Zn(2+) site is built by cysteine 237, histidine 262, and glutamate 266. A 'KMSKS' region motif is present at residues 294-298 (KMSKS). Residue lysine 297 coordinates ATP.

It belongs to the class-I aminoacyl-tRNA synthetase family. Monomer. Zn(2+) is required as a cofactor.

It localises to the cytoplasm. The enzyme catalyses tRNA(Cys) + L-cysteine + ATP = L-cysteinyl-tRNA(Cys) + AMP + diphosphate. The chain is Cysteine--tRNA ligase from Synechococcus sp. (strain JA-3-3Ab) (Cyanobacteria bacterium Yellowstone A-Prime).